The following is a 466-amino-acid chain: Asparagine--tRNA ligase (466 aa).

This sequence belongs to the class-II aminoacyl-tRNA synthetase family. As to quaternary structure, homodimer.

It is found in the cytoplasm. It carries out the reaction tRNA(Asn) + L-asparagine + ATP = L-asparaginyl-tRNA(Asn) + AMP + diphosphate + H(+). In Klebsiella pneumoniae subsp. pneumoniae (strain ATCC 700721 / MGH 78578), this protein is Asparagine--tRNA ligase.